We begin with the raw amino-acid sequence, 104 residues long: Large ribosomal subunit protein bL21 (104 aa).

It belongs to the bacterial ribosomal protein bL21 family. Part of the 50S ribosomal subunit. Contacts protein L20.

This protein binds to 23S rRNA in the presence of protein L20. This chain is Large ribosomal subunit protein bL21, found in Streptococcus pyogenes serotype M1.